We begin with the raw amino-acid sequence, 160 residues long: 3-dehydroquinate dehydratase (160 aa).

The active-site Proton acceptor is the Tyr-22. Asn-73, His-79, and Asp-86 together coordinate substrate. His-99 (proton donor) is an active-site residue. Substrate contacts are provided by residues Ile-100–Ser-101 and Arg-110.

The protein belongs to the type-II 3-dehydroquinase family. In terms of assembly, homododecamer.

It carries out the reaction 3-dehydroquinate = 3-dehydroshikimate + H2O. Its pathway is metabolic intermediate biosynthesis; chorismate biosynthesis; chorismate from D-erythrose 4-phosphate and phosphoenolpyruvate: step 3/7. Functionally, catalyzes a trans-dehydration via an enolate intermediate. This Sulfurimonas denitrificans (strain ATCC 33889 / DSM 1251) (Thiomicrospira denitrificans (strain ATCC 33889 / DSM 1251)) protein is 3-dehydroquinate dehydratase.